A 904-amino-acid chain; its full sequence is Serine/arginine repetitive matrix protein 1 (904 aa).

Position 1 is an N-acetylmethionine (Met1). The necessary for DNA and RNA-binding stretch occupies residues Met1–Lys151. Residues Met1–Lys156 form a necessary for mRNA 3'-end cleavage and cytoplasmic accumulation region. Citrulline is present on Arg7. A PWI domain is found at Gln27–Leu126. Lys127 participates in a covalent cross-link: Glycyl lysine isopeptide (Lys-Gly) (interchain with G-Cter in SUMO2). Positions Glu139 to Arg170 are enriched in basic and acidic residues. The segment at Glu139–Ser904 is disordered. Residue Lys140 is modified to N6-acetyllysine. Basic residues predominate over residues Ser171 to Ser207. The span at Pro214–Ser234 shows a compositional bias: basic and acidic residues. Phosphothreonine is present on Thr220. Ser227 is modified (phosphoserine). Lys231 is covalently cross-linked (Glycyl lysine isopeptide (Lys-Gly) (interchain with G-Cter in SUMO1); alternate). Lys231 is covalently cross-linked (Glycyl lysine isopeptide (Lys-Gly) (interchain with G-Cter in SUMO2); alternate). Residues Ser234 and Ser240 each carry the phosphoserine modification. Thr241 is subject to Phosphothreonine. The span at Lys246–Arg275 shows a compositional bias: basic and acidic residues. Lys249 participates in a covalent cross-link: Glycyl lysine isopeptide (Lys-Gly) (interchain with G-Cter in SUMO2). A Phosphoserine modification is found at Ser260. Composition is skewed to basic residues over residues Pro276–Pro329 and Pro336–Ser351. The tract at residues Arg300–Pro688 is necessary for speckles and matrix localization. The segment covering Ser352–Arg368 has biased composition (low complexity). Ser389, Ser391, Ser393, and Ser402 each carry phosphoserine. Thr406 bears the Phosphothreonine mark. Ser414 is subject to Phosphoserine. Thr416 is subject to Phosphothreonine. 4 positions are modified to phosphoserine: Ser420, Ser429, Ser431, and Ser436. The span at Val428–Lys438 shows a compositional bias: polar residues. Residue Lys447 forms a Glycyl lysine isopeptide (Lys-Gly) (interchain with G-Cter in SUMO2) linkage. Ser450 and Ser452 each carry phosphoserine. A Glycyl lysine isopeptide (Lys-Gly) (interchain with G-Cter in SUMO2) cross-link involves residue Lys459. A phosphoserine mark is found at Ser463 and Ser465. A Glycyl lysine isopeptide (Lys-Gly) (interchain with G-Cter in SUMO2) cross-link involves residue Lys472. Ser478 is subject to Phosphoserine. Residues Ser478–Ser501 are compositionally biased toward low complexity. The segment covering Glu503–Gly518 has biased composition (basic and acidic residues). Ser524, Ser526, Ser528, Ser530, Ser532, Ser549, and Ser551 each carry phosphoserine. Residues Pro533–Ser560 show a composition bias toward basic residues. Phosphothreonine is present on Thr555. Phosphoserine is present on residues Ser560 and Ser562. The span at Pro567 to Ser592 shows a compositional bias: basic residues. Phosphothreonine occurs at positions 572, 574, and 581. Ser583 is modified (phosphoserine). Low complexity predominate over residues Pro593 to Ser605. At Tyr596 the chain carries Phosphotyrosine. A phosphoserine mark is found at Ser597, Ser605, and Ser607. At Thr614 the chain carries Phosphothreonine. Residues Ser616, Ser626, Ser628, Ser636, and Ser638 each carry the phosphoserine modification. Over residues Pro621 to Ser636 the composition is skewed to basic residues. Residues Thr649–Gly663 are compositionally biased toward basic residues. Phosphoserine occurs at positions 694, 695, 696, 705, 707, 713, and 715. Composition is skewed to low complexity over residues Arg701–Arg719 and Ala736–Pro759. A Phosphothreonine modification is found at Thr718. Ser738, Ser740, Ser748, Ser752, Ser754, Ser756, Ser769, Ser773, Ser775, and Ser777 each carry phosphoserine. Residues Val771–Val786 are compositionally biased toward low complexity. Thr778 is modified (phosphothreonine). 2 positions are modified to phosphoserine: Ser781 and Ser791. Phosphothreonine is present on Thr793. Phosphoserine occurs at positions 795, 797, and 802. Residues Lys809 to Glu834 show a composition bias toward basic residues. The span at Val837–Pro866 shows a compositional bias: low complexity. Lys869 participates in a covalent cross-link: Glycyl lysine isopeptide (Lys-Gly) (interchain with G-Cter in SUMO2). Position 872 is a phosphothreonine (Thr872). Ser874 carries the post-translational modification Phosphoserine. Residues Asp882–Leu892 show a composition bias toward basic and acidic residues. A Phosphoserine modification is found at Ser901.

It belongs to the splicing factor SR family. In terms of assembly, identified in the spliceosome C complex. Found in a pre-mRNA splicing complex with SFRS4, SFRS5, SNRP70, SNRPA1, SRRM1 and SRRM2. Found in a pre-mRNA exonic splicing enhancer (ESE) complex with SNRP70, SNRPA1, SRRM1 and TRA2B/SFRS10. Component of the minor spliceosome, which splices U12-type introns. Found in a mRNA splicing-dependent exon junction complex (EJC) with DEK, PRPF8, NCBP1, RBM8A, RNPS1, SRRM1 and ALYREF/THOC4. Interacts with DDX39B, CPSF1, RBM8A, RNPS1, and ALYREF/THOC4. Seems to be a compound of RNA export complexes that are released from speckles in a ATP-dependent manner. Post-translationally, phosphorylated on multiple serine and threonine residues by DYRK3 during the G2-to-M transition, after the nuclear-envelope breakdown. Phosphorylation by DYRK3 promotes disassembly of nuclear speckles. Citrullinated by PADI4.

The protein localises to the nucleus matrix. It is found in the nucleus speckle. In terms of biological role, part of pre- and post-splicing multiprotein mRNP complexes. As a component of the minor spliceosome, involved in the splicing of U12-type introns in pre-mRNAs. Involved in numerous pre-mRNA processing events. Promotes constitutive and exonic splicing enhancer (ESE)-dependent splicing activation by bridging together sequence-specific (SR family proteins, SFRS4, SFRS5 and TRA2B/SFRS10) and basal snRNP (SNRP70 and SNRPA1) factors of the spliceosome. Stimulates mRNA 3'-end cleavage independently of the formation of an exon junction complex. Binds both pre-mRNA and spliced mRNA 20-25 nt upstream of exon-exon junctions. Binds RNA and DNA with low sequence specificity and has similar preference for either double- or single-stranded nucleic acid substrates. This Homo sapiens (Human) protein is Serine/arginine repetitive matrix protein 1 (SRRM1).